A 700-amino-acid chain; its full sequence is Elongation factor G 2 (700 aa).

Residues 8–290 (ERYRNIGISA…AVIDFLPSPV (283 aa)) form the tr-type G domain. Residues 17-24 (AHIDAGKT), 88-92 (DTPGH), and 142-145 (NKMD) each bind GTP.

The protein belongs to the TRAFAC class translation factor GTPase superfamily. Classic translation factor GTPase family. EF-G/EF-2 subfamily.

Its subcellular location is the cytoplasm. Functionally, catalyzes the GTP-dependent ribosomal translocation step during translation elongation. During this step, the ribosome changes from the pre-translocational (PRE) to the post-translocational (POST) state as the newly formed A-site-bound peptidyl-tRNA and P-site-bound deacylated tRNA move to the P and E sites, respectively. Catalyzes the coordinated movement of the two tRNA molecules, the mRNA and conformational changes in the ribosome. The protein is Elongation factor G 2 of Burkholderia orbicola (strain AU 1054).